The chain runs to 327 residues: rRNA 2'-O-methyltransferase fibrillarin (327 aa).

The tract at residues 1–96 (MGTDYRNSGR…GFKGGAKTMV (96 aa)) is disordered. Asymmetric dimethylarginine occurs at positions 10, 19, 44, 49, 55, 65, 69, and 78. Basic and acidic residues predominate over residues 22–56 (GNDRRDSGRSFGDRRPERPDFKRGDGGRGFGDRRG). Residues 73-90 (DGPGGRGGPGGPGGGFKG) show a composition bias toward gly residues. Residues 181 to 182 (TT), 200 to 201 (EF), 225 to 226 (DA), and 245 to 248 (DVAQ) each bind S-adenosyl-L-methionine.

This sequence belongs to the methyltransferase superfamily. Fibrillarin family. In terms of assembly, component of box C/D small nucleolar ribonucleoprotein (snoRNP) particles. It is associated with the U3, U8 and U13 small nuclear RNAs. By homology to other fibrillarins, some or all of the N-terminal domain arginines are modified to asymmetric dimethylarginine (DMA).

The protein resides in the nucleus. It localises to the nucleolus. The enzyme catalyses L-glutaminyl-[histone H2A] + S-adenosyl-L-methionine = N(5)-methyl-L-glutaminyl-[histone H2A] + S-adenosyl-L-homocysteine + H(+). S-adenosyl-L-methionine-dependent methyltransferase that has the ability to methylate both RNAs and proteins. Involved in pre-rRNA processing. Utilizes the methyl donor S-adenosyl-L-methionine to catalyze the site-specific 2'-hydroxyl methylation of ribose moieties in pre-ribosomal RNA. Site specificity is provided by a guide RNA that base pairs with the substrate. Methylation occurs at a characteristic distance from the sequence involved in base pairing with the guide RNA. Also acts as a protein methyltransferase by mediating methylation of 'Gln-105' of histone H2A (H2AQ105me), a modification that impairs binding of the FACT complex and is specifically present at 35S ribosomal DNA locus. The protein is rRNA 2'-O-methyltransferase fibrillarin of Giardia intestinalis (Giardia lamblia).